Here is a 34-residue protein sequence, read N- to C-terminus: Photosystem II reaction center protein M (34 aa).

Residues 5–25 form a helical membrane-spanning segment; that stretch reads ILALIAIALFISVPTAFLIII.

Belongs to the PsbM family. In terms of assembly, PSII is composed of 1 copy each of membrane proteins PsbA, PsbB, PsbC, PsbD, PsbE, PsbF, PsbH, PsbI, PsbJ, PsbK, PsbL, PsbM, PsbT, PsbX, PsbY, PsbZ, Psb30/Ycf12, at least 3 peripheral proteins of the oxygen-evolving complex and a large number of cofactors. It forms dimeric complexes.

Its subcellular location is the plastid. It is found in the chloroplast thylakoid membrane. One of the components of the core complex of photosystem II (PSII). PSII is a light-driven water:plastoquinone oxidoreductase that uses light energy to abstract electrons from H(2)O, generating O(2) and a proton gradient subsequently used for ATP formation. It consists of a core antenna complex that captures photons, and an electron transfer chain that converts photonic excitation into a charge separation. This subunit is found at the monomer-monomer interface. The polypeptide is Photosystem II reaction center protein M (Gnetum parvifolium (Small-leaved jointfir)).